Reading from the N-terminus, the 78-residue chain is Transmembrane protein 258 (78 aa).

Topologically, residues 1–18 (MDVMQRYVSPVNPAVFPH) are cytoplasmic. A helical membrane pass occupies residues 19–39 (LATVLLVIGTFFTAWFFIFVV). The Cytoplasmic segment spans residues 40-53 (SRKSSKESTLIKEL). The chain crosses the membrane as a helical span at residues 54–74 (LISLCASIFLGFGIVFLLLTV). The Perinuclear space segment spans residues 75–78 (GIYV).

It belongs to the OST5 family. As to quaternary structure, homodimer. Component of the oligosaccharyltransferase (OST) complex. Interacts with klar and Msp300, components of LINC complex.

The protein resides in the nucleus outer membrane. Its subcellular location is the cytoplasm. The protein localises to the endoplasmic reticulum membrane. Subunit of the oligosaccharyl transferase (OST) complex that catalyzes the initial transfer of a defined glycan (Glc(3)Man(9)GlcNAc(2) in eukaryotes) from the lipid carrier dolichol-pyrophosphate to an asparagine residue within an Asn-X-Ser/Thr consensus motif in nascent polypeptide chains, the first step in protein N-glycosylation. N-glycosylation occurs cotranslationally and the complex associates with the Sec61 complex at the channel-forming translocon complex that mediates protein translocation across the endoplasmic reticulum (ER). All subunits are required for a maximal enzyme activity. In addition may regulates nuclear envelope (NE) architecture and nuclear positioning through the linker of nucleoskeleton and cytoskeleton (LINC)-dependent and -independent mechanisms. The sequence is that of Transmembrane protein 258 from Drosophila melanogaster (Fruit fly).